A 388-amino-acid chain; its full sequence is uncharacterized protein (388 aa).

Residues cysteine 18, cysteine 24, cysteine 27, and cysteine 99 each contribute to the [4Fe-4S] cluster site. The S-adenosyl-L-methionine site is built by glutamine 212, glutamate 262, and asparagine 313. The Nucleophile role is filled by cysteine 343.

This sequence belongs to the class I-like SAM-binding methyltransferase superfamily. RNA M5U methyltransferase family.

This is an uncharacterized protein from Bdellovibrio bacteriovorus (strain ATCC 15356 / DSM 50701 / NCIMB 9529 / HD100).